A 485-amino-acid chain; its full sequence is Adenosylhomocysteinase (485 aa).

Positions 64, 139, and 205 each coordinate substrate. 206–208 (TTT) provides a ligand contact to NAD(+). 2 residues coordinate substrate: Lys-235 and Asp-239. NAD(+) is bound by residues Asn-240, 269–274 (GYGDVG), Glu-292, Asn-327, 348–350 (IGH), and Asn-397.

This sequence belongs to the adenosylhomocysteinase family. NAD(+) serves as cofactor.

It catalyses the reaction S-adenosyl-L-homocysteine + H2O = L-homocysteine + adenosine. It participates in amino-acid biosynthesis; L-homocysteine biosynthesis; L-homocysteine from S-adenosyl-L-homocysteine: step 1/1. Functionally, adenosylhomocysteine is a competitive inhibitor of S-adenosyl-L-methionine-dependent methyl transferase reactions; therefore adenosylhomocysteinase may play a key role in the control of methylations via regulation of the intracellular concentration of adenosylhomocysteine. The chain is Adenosylhomocysteinase (SAHH) from Phalaenopsis sp. (Moth orchid).